Reading from the N-terminus, the 1063-residue chain is Structural polyprotein (1063 aa).

The tract at residues 23–131 is disordered; the sequence is LRAELAAGAS…LGPPTNPFQA (109 aa). The interval 30–69 is human C1QBP/SF2P32-binding; the sequence is GASQLRRPRPPRQRDSSTSGDDSGRDSGGPRRRRGNRGRG. At Ser-46 the chain carries Phosphoserine; by host. Positions 59 to 69 are enriched in basic residues; that stretch reads PRRRRGNRGRG. The segment covering 70–87 has biased composition (basic and acidic residues); sequence QRKDWSKAPPPPEERQES. Residues 93–107 are compositionally biased toward pro residues; sequence APKPPRAPPQPPQPP. An intrachain disulfide couples Cys-153 to Cys-197. Residues 279 to 300 form a functions as E2 signal peptide region; that stretch reads GAPQVFLAGLLLAAVAVGTARA. Topologically, residues 301 to 534 are extracellular; it reads GLQPRTDIAA…LWLATANALS (234 aa). A disordered region spans residues 305-327; sequence RTDIAAPPAPPQAPRAHGKHYGH. N-linked (GlcNAc...) asparagine; by host glycosylation is found at Asn-353, Asn-371, Asn-410, and Asn-429. Residues 535-555 traverse the membrane as a helical segment; the sequence is LDHALAAVVLLVPWVLIFMLC. Over 556–582 the chain is Cytoplasmic; that stretch reads RRACRRRGAAAALTAVVLQGYNPPAYG. The interval 563-582 is functions as E1 signal peptide; it reads GAAAALTAVVLQGYNPPAYG. Residues 583–1028 are Extracellular-facing; it reads EEAFTYLCTA…QTWAEWAAAH (446 aa). Disulfide bonds link Cys-590/Cys-595, Cys-619/Cys-824, Cys-641/Cys-653, Cys-699/Cys-712, Cys-758/Cys-767, Cys-807/Cys-817, Cys-931/Cys-934, and Cys-950/Cys-983. Residue Asn-658 is glycosylated (N-linked (GlcNAc...) asparagine; by host). Asn-670 and Ala-671 together coordinate Ca(2+). The Ca(2+) site is built by Asp-718 and Thr-719. Asn-759 and Asn-791 each carry an N-linked (GlcNAc...) asparagine; by host glycan. 2 O-linked (GalNAc...) threonine; by host glycosylation sites follow: Thr-1011 and Thr-1012. A helical transmembrane segment spans residues 1029–1049; that stretch reads WWQLTLGAICALLLAGLLACC. At 1050–1063 the chain is on the extracellular side; that stretch reads AKCLYYLRGAIAPR.

Homodimer; further assembles into homooligomer. Interacts with human C1QBP. Interacts (via N-terminus) with protease/methyltransferase p150. As to quaternary structure, heterodimer with spike glycoprotein E2. In terms of assembly, heterodimer with spike glycoprotein E1. Structural polyprotein: Specific enzymatic cleavages in vivo yield mature proteins. Two signal peptidase-mediated cleavages within the polyprotein produce the structural proteins capsid, E2, and E1. The E2 signal peptide remains attached to the C-terminus of the capsid protein after cleavage by the signal peptidase. Another signal peptide at E2 C-terminus directs E1 to the ER, with a similar mechanism. In terms of processing, contains three N-linked oligosaccharides. Post-translationally, capsid is phosphorylated on Ser-46 by host. This phosphorylation negatively regulates capsid protein RNA-binding activity. Dephosphorylated by human PP1A.

The protein localises to the virion. Its subcellular location is the host cytoplasm. It localises to the host mitochondrion. It is found in the virion membrane. The protein resides in the host Golgi apparatus membrane. Functionally, capsid protein interacts with genomic RNA and assembles into icosahedric core particles 65-70 nm in diameter. The resulting nucleocapsid eventually associates with the cytoplasmic domain of E2 at the cell membrane, leading to budding and formation of mature virions from host Golgi membranes. Phosphorylation negatively regulates RNA-binding activity, possibly delaying virion assembly during the viral replication phase. Capsid protein dimerizes and becomes disulfide-linked in the virion. Modulates genomic RNA replication. Modulates subgenomic RNA synthesis by interacting with human C1QBP/SF2P32. Induces both perinuclear clustering of mitochondria and the formation of electron-dense intermitochondrial plaques, both hallmarks of rubella virus infected cells. Induces apoptosis when expressed in transfected cells. In terms of biological role, responsible for viral attachment to target host cell, by binding to the cell receptor. Its transport to the plasma membrane depends on interaction with E1 protein. The surface glycoproteins display an irregular helical organization and a pseudo-tetrameric inner nucleocapsid arrangement. Class II viral fusion protein. Fusion activity is inactive as long as E1 is bound to E2 in mature virion. After virus attachment to target cell and clathrin-mediated endocytosis, acidification of the endosome would induce dissociation of E1/E2 heterodimer and concomitant trimerization of the E1 subunits. This E1 homotrimer is fusion active, and promotes release of viral nucleocapsid in cytoplasm after endosome and viral membrane fusion. The cytoplasmic tail of spike glycoprotein E1 modulates virus release. The surface glycoproteins display an irregular helical organization and a pseudo-tetrameric inner nucleocapsid arrangement. The sequence is that of Structural polyprotein from Rubella virus (strain BRD1) (RUBV).